The primary structure comprises 61 residues: Metallothionein-1B (61 aa).

The tract at residues 1–29 is beta; that stretch reads MDPNCSCPTSGSCSCAGSCTCKACRCPSC. Positions 5, 7, 13, 15, 19, 21, 24, 26, 29, 33, 34, 36, 37, 41, 44, 48, 50, 57, 59, and 60 each coordinate a divalent metal cation. Positions 30–61 are alpha; it reads KKSCCSCCPVGCAKCAQGCVCKGASDKCSCCA.

Belongs to the metallothionein superfamily. Type 1 family.

Metallothioneins have a high content of cysteine residues that bind various heavy metals; these proteins are transcriptionally regulated by both heavy metals and glucocorticoids. The polypeptide is Metallothionein-1B (MT1B) (Ovis aries (Sheep)).